Reading from the N-terminus, the 56-residue chain is Large ribosomal subunit protein bL33A (56 aa).

This sequence belongs to the bacterial ribosomal protein bL33 family.

The sequence is that of Large ribosomal subunit protein bL33A from Cutibacterium acnes (strain DSM 16379 / KPA171202) (Propionibacterium acnes).